A 961-amino-acid chain; its full sequence is Vinculin (961 aa).

2 tandem repeats follow at residues 258-362 (ELDN…MGEL) and 371-470 (LGVD…ELKA). Positions 258–470 (ELDNLTVLKK…LTQKLYELKA (213 aa)) are 2 X repeats. Residues 720-778 (AIAPPQPPPLPTSLPPPIPELSALHLSNQNAERAPPRPPLPREGLAPVRPPPPETDDED) form a disordered region. The span at 723 to 738 (PPQPPPLPTSLPPPIP) shows a compositional bias: pro residues. The residue at position 774 (T774) is a Phosphothreonine.

This sequence belongs to the vinculin/alpha-catenin family. In terms of assembly, exhibits self-association properties.

It is found in the cytoplasm. It localises to the cytoskeleton. Its subcellular location is the cell junction. The protein localises to the adherens junction. The protein resides in the cell membrane. Functionally, involved in cell adhesion. May be involved in the attachment of the actin-based microfilaments to the plasma membrane. The protein is Vinculin (Vinc) of Drosophila melanogaster (Fruit fly).